We begin with the raw amino-acid sequence, 215 residues long: Cytochrome b6 (215 aa).

Residues 32 to 52 (IFYCLGGITLTCFLVQVATGF) traverse the membrane as a helical segment. Cys35 contacts heme c. Residues His86 and His100 each contribute to the heme b site. Transmembrane regions (helical) follow at residues 90 to 110 (ASMMVLMMILHVFRVYLTGGF), 116 to 136 (LTWITGVILAVLTVSFGVTGY), and 186 to 206 (LHTFVLPLLTAVFMLMHFLMI). Residues His187 and His202 each coordinate heme b.

The protein belongs to the cytochrome b family. PetB subfamily. As to quaternary structure, the 4 large subunits of the cytochrome b6-f complex are cytochrome b6, subunit IV (17 kDa polypeptide, PetD), cytochrome f and the Rieske protein, while the 4 small subunits are PetG, PetL, PetM and PetN. The complex functions as a dimer. Heme b serves as cofactor. Heme c is required as a cofactor.

The protein localises to the plastid. The protein resides in the chloroplast thylakoid membrane. Functionally, component of the cytochrome b6-f complex, which mediates electron transfer between photosystem II (PSII) and photosystem I (PSI), cyclic electron flow around PSI, and state transitions. In Psilotum nudum (Whisk fern), this protein is Cytochrome b6.